Reading from the N-terminus, the 406-residue chain is HEAT repeat-containing taxis protein OE_2401F (406 aa).

7 HEAT repeats span residues Leu-7–Glu-41, Pro-42–Leu-78, Gly-90–Ala-127, Ile-153–Leu-184, Thr-185–Phe-215, Glu-216–Pro-252, and Val-370–Thr-406.

Interacts with chemotaxis (Che) proteins.

Its function is as follows. Involved in taxis signal transduction. Essential for the ability to control the direction of flagellar rotation. May have a role between CheY and the flagellum. This is HEAT repeat-containing taxis protein OE_2401F from Halobacterium salinarum (strain ATCC 29341 / DSM 671 / R1).